Consider the following 334-residue polypeptide: TPR repeat-containing protein MJ0798 (334 aa).

7 TPR repeats span residues 102–135 (WKLW…NQNT), 137–168 (LLCK…DRNN), 169–202 (YKAL…NPND), 204–235 (EALE…KPDD), 236–269 (IDLI…NPNV), 273–306 (EQIY…NLYH), and 308–333 (EIYE…YKKL).

The polypeptide is TPR repeat-containing protein MJ0798 (Methanocaldococcus jannaschii (strain ATCC 43067 / DSM 2661 / JAL-1 / JCM 10045 / NBRC 100440) (Methanococcus jannaschii)).